A 37-amino-acid polypeptide reads, in one-letter code: Large ribosomal subunit protein bL36 (37 aa).

This sequence belongs to the bacterial ribosomal protein bL36 family.

This chain is Large ribosomal subunit protein bL36, found in Synechococcus sp. (strain CC9605).